The primary structure comprises 299 residues: MDKTWAEVTCEIPAAMIDLLADFLVELSGNGVSIDNLELDTFSLDTMDEAPVKTVRAYFTPDDELEEKLAALNRFIQEHAPAYGDAAPAPPTVTTLREEDWATGWRQHFAPTRIGRKLVIKPTWEPFSPEPGDLVIELDPGMAFGTGTHPTTRLCLEALEKLGTAGDVLDVGTGSGILAMAAVKLGAQRVVGTDIDPDAVAVARENCAMNGVTAELVTTPLADIPGQFSVVLANILAEDLVRMAADLTAKVAPGGFLILSGILVERESYVIDGFVSTGLTLAETTREGEWSCLLYQAGQ.

Residues T152, G172, D194, and N234 each coordinate S-adenosyl-L-methionine.

The protein belongs to the methyltransferase superfamily. PrmA family.

The protein localises to the cytoplasm. The enzyme catalyses L-lysyl-[protein] + 3 S-adenosyl-L-methionine = N(6),N(6),N(6)-trimethyl-L-lysyl-[protein] + 3 S-adenosyl-L-homocysteine + 3 H(+). Functionally, methylates ribosomal protein L11. In Geobacter metallireducens (strain ATCC 53774 / DSM 7210 / GS-15), this protein is Ribosomal protein L11 methyltransferase.